The sequence spans 240 residues: Spore coat polysaccharide biosynthesis protein SpsF (240 aa).

It belongs to the CMP-NeuNAc synthase family.

It functions in the pathway spore coat biogenesis; spore coat polysaccharide biosynthesis. The polypeptide is Spore coat polysaccharide biosynthesis protein SpsF (spsF) (Bacillus subtilis (strain 168)).